A 463-amino-acid chain; its full sequence is Retinoic acid receptor RXR-gamma (463 aa).

Residues 1 to 138 are modulating; sequence MYGNYSHFMK…TSPGSLVKHI (138 aa). A disordered region spans residues 16–53; it reads GGSPGHTGSTSMSPSVALPTGKPMDSHPSYTDTPVSAP. 2 consecutive NR C4-type zinc fingers follow at residues 139–159 and 175–199; these read CAIC…CEGC and CRDN…YQKC. A DNA-binding region (nuclear receptor) is located at residues 139-204; the sequence is CAICGDRSSG…RYQKCLVMGM (66 aa). The hinge stretch occupies residues 205–230; the sequence is KREAVQEERQRSRERAESEAECASSS. Basic and acidic residues predominate over residues 211-222; the sequence is EERQRSRERAES. The interval 211–232 is disordered; that stretch reads EERQRSRERAESEAECASSSHE. One can recognise an NR LBD domain in the interval 231-459; that stretch reads HEDMPVERIL…SFLMEMLETP (229 aa).

It belongs to the nuclear hormone receptor family. NR2 subfamily. As to quaternary structure, homodimer. Heterodimer with a RAR molecule. Binds DNA preferentially as a RAR/RXR heterodimer. Interacts with RARA. Acetylated by EP300.

The protein resides in the nucleus. Its subcellular location is the cytoplasm. In terms of biological role, receptor for retinoic acid. Retinoic acid receptors bind as heterodimers to their target response elements in response to their ligands, all-trans or 9-cis retinoic acid, and regulate gene expression in various biological processes. The RAR/RXR heterodimers bind to the retinoic acid response elements (RARE) composed of tandem 5'-AGGTCA-3' sites known as DR1-DR5. The high affinity ligand for RXRs is 9-cis retinoic acid. This chain is Retinoic acid receptor RXR-gamma (Rxrg), found in Mus musculus (Mouse).